Here is a 448-residue protein sequence, read N- to C-terminus: Phosphoglucosamine mutase (448 aa).

Catalysis depends on Ser108, which acts as the Phosphoserine intermediate. Positions 108, 247, 249, and 251 each coordinate Mg(2+). Ser108 bears the Phosphoserine mark.

The protein belongs to the phosphohexose mutase family. Mg(2+) is required as a cofactor. In terms of processing, activated by phosphorylation.

The enzyme catalyses alpha-D-glucosamine 1-phosphate = D-glucosamine 6-phosphate. In terms of biological role, catalyzes the conversion of glucosamine-6-phosphate to glucosamine-1-phosphate. The sequence is that of Phosphoglucosamine mutase from Herminiimonas arsenicoxydans.